The primary structure comprises 568 residues: Sphingosine-1-phosphate lyase 1 (568 aa).

Residues 1–40 lie on the Lumenal side of the membrane; that stretch reads MPGTDLLKLKDFEPYLEILESYSTKAKNYVNGYCTKYEPW. Residues 41-61 traverse the membrane as a helical; Signal-anchor for type III membrane protein segment; sequence QLIAWSVLCTLLIVWVYELIF. Over 62 to 568 the chain is Cytoplasmic; the sequence is QPESLWSRFK…NQMNGSPKPR (507 aa). At Lys-353 the chain carries N6-(pyridoxal phosphate)lysine; alternate. Lys-353 bears the N6-acetyllysine; alternate mark. 3'-nitrotyrosine is present on residues Tyr-356 and Tyr-366. Ser-564 bears the Phosphoserine mark.

This sequence belongs to the group II decarboxylase family. Sphingosine-1-phosphate lyase subfamily. It depends on pyridoxal 5'-phosphate as a cofactor. As to expression, highest levels are found in liver, small intestine and thymus, followed by kidney, lung, heart, spleen and brain (at protein level). Also detected in stomach, testis and skeletal muscle (at protein level).

It is found in the endoplasmic reticulum membrane. It catalyses the reaction sphinganine 1-phosphate = hexadecanal + phosphoethanolamine. The catalysed reaction is sphing-4-enine 1-phosphate = (2E)-hexadecenal + phosphoethanolamine. It participates in lipid metabolism; sphingolipid metabolism. Cleaves phosphorylated sphingoid bases (PSBs), such as sphingosine-1-phosphate, into fatty aldehydes and phosphoethanolamine. Elevates stress-induced ceramide production and apoptosis. Required for global lipid homeostasis in liver and cholesterol homeostasis in fibroblasts. Involved in the regulation of pro-inflammatory response and neutrophil trafficking. Modulates neuronal autophagy via phosphoethanolamine production which regulates accumulation of aggregate-prone proteins such as APP. Seems to play a role in establishing neuronal contact sites and axonal maintenance. This chain is Sphingosine-1-phosphate lyase 1, found in Mus musculus (Mouse).